The following is a 193-amino-acid chain: uncharacterized protein (193 aa).

This is an uncharacterized protein from Mycoplasma genitalium (strain ATCC 33530 / DSM 19775 / NCTC 10195 / G37) (Mycoplasmoides genitalium).